We begin with the raw amino-acid sequence, 806 residues long: Mitogen-activated protein kinase 7 (806 aa).

Residues 1-23 (MAEPLKEEDGEDGSGEPPGRVKA) are disordered. Alanine 2 bears the N-acetylalanine mark. Residues 2–77 (AEPLKEEDGE…VVSSARRRLT (76 aa)) form a required for cytoplasmic targeting region. The 293-residue stretch at 55-347 (YEIIETIGNG…AAAALRHPFL (293 aa)) folds into the Protein kinase domain. Residues 61-69 (IGNGAYGVV) and lysine 84 each bind ATP. Residues 78–139 (GQQVAIKKIP…FRSVYVVLDL (62 aa)) form a required for binding to MAP2K5 region. Positions 140 to 406 (MESDLHQIIH…QQIRFQPSLQ (267 aa)) are necessary for oligomerization. Residue aspartate 182 is the Proton acceptor of the active site. The TXY motif lies at 219 to 221 (TEY). Positions 407–806 (PVASEPVCPD…LSDLPDLQEP (400 aa)) are may not be required for kinase activity; required to stimulate MEF2C activity. 2 disordered regions span residues 424–473 (APSG…AISD) and 488–727 (RSRL…PKGS). Positions 433–443 (SPPPALPPCSD) are enriched in pro residues. Basic and acidic residues-rich tracts occupy residues 502–519 (PEPR…EREE), 527–544 (RAKE…KERG), and 563–573 (DNDRSLLERWT). Positions 505–539 (RKPVTAQERQREREEKRRRRQERAKEREKRRQERE) match the Nuclear localization signal motif. The span at 578–592 (PPAPAPAPAPAPAPA) shows a compositional bias: pro residues. A compositionally biased stretch (low complexity) spans 593-603 (PSSAQPTSTPT). Residues 627–643 (VCPPPGPVPQPAGPIPA) show a composition bias toward pro residues. Residues 647–660 (TAPSTSLLASQSLV) show a composition bias toward polar residues. Residues 678 to 689 (PSGPPPPDPGLT) show a composition bias toward pro residues. The segment covering 693–710 (STSESPDVNLVTQQLSKS) has biased composition (polar residues). Serine 710 carries the phosphoserine modification. Position 723 is a phosphothreonine (threonine 723).

This sequence belongs to the protein kinase superfamily. CMGC Ser/Thr protein kinase family. MAP kinase subfamily. In terms of assembly, interacts with MAP2K5. Forms oligomers. Interacts with MEF2A, MEF2C and MEF2D; the interaction phosphorylates the MEF2s and enhances transcriptional activity of MEF2A, MEF2C but not MEF2D. Interacts with SGK1. Interacts with PML. Interacts (via N-terminal half) with HSP90AB1-CDC37 chaperone complex in resting cells; the interaction is MAP2K5-independent and prevents MAPK7 from ubiquitination and proteasomal degradation. Interacts with STUB1/CHIP; the interaction is enhanced in the presence of IGF1 or MAP2K5 and promotes STUB1/CHIP E3 ligase activity. Mg(2+) is required as a cofactor. Post-translationally, dually phosphorylated on Thr-219 and Tyr-221, which activates the enzyme. As to expression, detected in testis, brain, kidney, lung and heart. Detected in total embryo (at protein level).

The protein resides in the cytoplasm. It is found in the nucleus. Its subcellular location is the PML body. The catalysed reaction is L-seryl-[protein] + ATP = O-phospho-L-seryl-[protein] + ADP + H(+). It carries out the reaction L-threonyl-[protein] + ATP = O-phospho-L-threonyl-[protein] + ADP + H(+). Activated by tyrosine and threonine phosphorylation. Activated in response to hyperosmolarity, hydrogen peroxide, and epidermal growth factor (EGF). Plays a role in various cellular processes such as proliferation, differentiation and cell survival. The upstream activator of MAPK7 is the MAPK kinase MAP2K5. Upon activation, it translocates to the nucleus and phosphorylates various downstream targets including MEF2C. EGF activates MAPK7 through a Ras-independent and MAP2K5-dependent pathway. As part of the MAPK/ERK signaling pathway, acts as a negative regulator of apoptosis in cardiomyocytes via interaction with STUB1/CHIP and promotion of STUB1-mediated ubiquitination and degradation of ICER-type isoforms of CREM. May have a role in muscle cell differentiation. May be important for endothelial function and maintenance of blood vessel integrity. MAP2K5 and MAPK7 interact specifically with one another and not with MEK1/ERK1 or MEK2/ERK2 pathways. Phosphorylates SGK1 at Ser-78 and this is required for growth factor-induced cell cycle progression. Involved in the regulation of p53/TP53 by disrupting the PML-MDM2 interaction. This Mus musculus (Mouse) protein is Mitogen-activated protein kinase 7 (Mapk7).